Consider the following 197-residue polypeptide: MPIGVPKVPFRSPGEEDASWVDVYNRLYRERLLFLGQEVDSEISNQLIGLMVYLSIENDTKDLYLFINSPGGWVIPGVAIYDTMQFVRPDVQTICMGLAASMGSFILAGGEITKRLAFPHARVMIHQPASSFYEAQTGEFILEAEELLKLRETLTRVYVQRTDKPLWVVSEDMERDVFMSATEAQAYGIVDLVAVVE.

Serine 101 acts as the Nucleophile in catalysis. Histidine 126 is a catalytic residue.

It belongs to the peptidase S14 family. In terms of assembly, component of the chloroplastic Clp protease core complex.

It is found in the plastid. It localises to the chloroplast stroma. It catalyses the reaction Hydrolysis of proteins to small peptides in the presence of ATP and magnesium. alpha-casein is the usual test substrate. In the absence of ATP, only oligopeptides shorter than five residues are hydrolyzed (such as succinyl-Leu-Tyr-|-NHMec, and Leu-Tyr-Leu-|-Tyr-Trp, in which cleavage of the -Tyr-|-Leu- and -Tyr-|-Trp bonds also occurs).. In terms of biological role, cleaves peptides in various proteins in a process that requires ATP hydrolysis. Has a chymotrypsin-like activity. Plays a major role in the degradation of misfolded proteins. The protein is ATP-dependent Clp protease proteolytic subunit of Daucus carota (Wild carrot).